The primary structure comprises 221 residues: Glutathione S-transferase class-mu 26 kDa isozyme 1 (221 aa).

The 81-residue stretch at 2 to 82 (PAKLGYWKIR…YIADKHGMIG (81 aa)) folds into the GST N-terminal domain. Residues 7–8 (YW), 40–44 (WFSKK), 53–54 (NL), and 66–67 (QS) contribute to the glutathione site. Residues 84–202 (TPEERARVSM…ESNRFIKWPL (119 aa)) enclose the GST C-terminal domain. Tyr-110 lines the substrate pocket.

Belongs to the GST superfamily. Mu family. In terms of assembly, homodimer.

The enzyme catalyses RX + glutathione = an S-substituted glutathione + a halide anion + H(+). In terms of biological role, conjugation of reduced glutathione to a wide number of exogenous and endogenous hydrophobic electrophiles. Functionally, GST isoenzymes appear to play a central role in the parasite detoxification system. Other functions are also suspected including a role in increasing the solubility of haematin in the parasite gut. The polypeptide is Glutathione S-transferase class-mu 26 kDa isozyme 1 (Fasciola hepatica (Liver fluke)).